The chain runs to 1072 residues: RIMS-binding protein 2 (1072 aa).

Positions 181–248 (GKVHLCVARY…PSNFVDFIQD (68 aa)) constitute an SH3 1 domain. Fibronectin type-III domains are found at residues 311–404 (VPYP…GKDV), 407–489 (APSQ…KKEA), and 503–604 (PPQD…VPPA). 2 disordered regions span residues 597–681 (PDLL…APVS) and 713–800 (SAGQ…TSHN). The span at 599–615 (LLVPPAPHPRTAPPPKP) shows a compositional bias: pro residues. The segment covering 620-635 (MDTKDQHLGPHVKVDE) has biased composition (basic and acidic residues). A compositionally biased stretch (low complexity) spans 660 to 670 (GPGRRSPSPSR). Phosphoserine occurs at positions 720 and 728. Composition is skewed to basic and acidic residues over residues 730–743 (EVKR…DFLK) and 754–765 (CHGDEYHTESSR). Over residues 771 to 781 (DIMEEDEEELY) the composition is skewed to acidic residues. Phosphoserine is present on residues S852 and S859. Position 861 is a phosphothreonine (T861). SH3 domains follow at residues 868 to 936 (LPAR…EIHA) and 972 to 1039 (VPTR…EVPD). The tract at residues 1044–1072 (HLSDAPPHYSHDPPMRSKAKRKKSVHFTP) is disordered. Positions 1060–1072 (SKAKRKKSVHFTP) are enriched in basic residues.

It belongs to the RIMBP family. As to quaternary structure, interacts with RIMS1, RIMS2, CACNA1D and CACNA1B, and potentially with other Ca(2+) channel alpha-1 isoforms.

It localises to the cell membrane. It is found in the synapse. Functionally, plays a role in the synaptic transmission as bifunctional linker that interacts simultaneously with RIMS1, RIMS2, CACNA1D and CACNA1B. This is RIMS-binding protein 2 (Rimbp2) from Mus musculus (Mouse).